A 1145-amino-acid polypeptide reads, in one-letter code: Adenylate cyclase type 3 (1145 aa).

Residues 1-79 (MPRNQGFSDP…FKRQRHETLL (79 aa)) lie on the Cytoplasmic side of the membrane. Helical transmembrane passes span 80–100 (VLVV…AVVF), 105–125 (LAPL…FVLC), 139–159 (VPYL…GLNF), 173–193 (AFFV…IVII), and 226–246 (ILAN…SYYM). Residues Asp324, Ile325, and Asp368 each contribute to the Mg(2+) site. Residues 324 to 329 (DIVGFT) and 366 to 368 (LGD) contribute to the ATP site. The helical transmembrane segment at 381 to 401 (EDHAVCSILMGLAMVEAISYV) threads the bilayer. The Cytoplasmic portion of the chain corresponds to 402-631 (REKTKTGVDM…RYSVEKEKQS (230 aa)). Residue Arg412 coordinates ATP. Lys465 is covalently cross-linked (Glycyl lysine isopeptide (Lys-Gly) (interchain with G-Cter in SUMO3)). The interval 504–564 (QNGLNGSAVP…DNPSFPNPRR (61 aa)) is disordered. 2 stretches are compositionally biased toward low complexity: residues 516–526 (APASSKPSSPA) and 535–544 (GSAHASGSTS). Phosphoserine is present on Ser524. Ser579 bears the Phosphoserine mark. The next 3 membrane-spanning stretches (helical) occupy residues 632–652 (GAAF…EILI), 663–683 (FVVG…AIFP), and 707–727 (WAML…LSCL). N-linked (GlcNAc...) asparagine glycosylation occurs at Asn735. 3 helical membrane-spanning segments follow: residues 753–773 (YNYV…VSHM), 774–794 (VKLT…LYAW), and 834–854 (LPLV…MLSF). Residues 855–1145 (YYFSRHVEKL…TLPHQVVDNP (291 aa)) are Cytoplasmic-facing. ATP is bound by residues Lys976, 1063–1065 (DIW), and 1070–1074 (NVASR). Ser1077 carries the phosphoserine; by CaMK2 modification. Lys1110 serves as a coordination point for ATP.

The protein belongs to the adenylyl cyclase class-4/guanylyl cyclase family. Mg(2+) serves as cofactor. Requires Mn(2+) as cofactor. In terms of processing, N-glycosylated. Rapidly phosphorylated after stimulation by odorants or forskolin. Phosphorylation by CaMK2 at Ser-1077 down-regulates enzyme activity. Post-translationally, sumoylated. Sumoylation is required for targeting of olfactory cilia. Detected in the acrosomal region of epididymal spermatozoa, the acrosomal region of round spermatids and in elongating spermatids. Detected in cilia in the olfactory epithelium (at protein level). Detected in olfactory epithelium neurons. Detected in brain, testis, late pachytene spermatocytes, round spermatids and elongating spermatids.

The protein resides in the cell membrane. Its subcellular location is the cell projection. It localises to the cilium. It is found in the golgi apparatus. The protein localises to the cytoplasm. The enzyme catalyses ATP = 3',5'-cyclic AMP + diphosphate. Specifically activated by the G alpha protein GNAL/G(olf) in signaling cascades triggered by odorant receptors. Activated by forskolin. After forskolin treatment, activity is further increased by calcium/calmodulin. In the absence of forskolin, calcium/calmodulin has little effect on enzyme activity. Functionally, catalyzes the formation of the signaling molecule cAMP in response to G-protein signaling. Participates in signaling cascades triggered by odorant receptors via its function in cAMP biosynthesis: specifically activated by G alpha protein GNAL/G(olf) in olfactory epithelium. Required for the perception of odorants. Required for normal sperm motility and normal male fertility. Plays a role in regulating insulin levels and body fat accumulation in response to a high fat diet. In Mus musculus (Mouse), this protein is Adenylate cyclase type 3 (Adcy3).